Reading from the N-terminus, the 925-residue chain is GPI ethanolamine phosphate transferase 1 (925 aa).

Topologically, residues 1 to 6 are cytoplasmic; that stretch reads MWNKHR. The chain crosses the membrane as a helical span at residues 7-27; the sequence is LAFILVGLLFHLFYLRSIFDI. Residues 28–457 lie on the Lumenal side of the membrane; it reads YFVSPLVHGM…TTYNWRFIRS (430 aa). N-linked (GlcNAc...) asparagine glycans are attached at residues N90, N138, N198, N286, N312, and N358. Residues 458-478 form a helical membrane-spanning segment; it reads IVTLGFIGWITYSFTIFLRLF. Topologically, residues 479 to 492 are cytoplasmic; the sequence is ILEKQYAMKTSPQN. A helical membrane pass occupies residues 493–510; that stretch reads LASFGALTAALNYVLYYQ. Residues 511-516 lie on the Lumenal side of the membrane; sequence RSPFNY. The helical transmembrane segment at 517–537 threads the bilayer; the sequence is YMYLLFPLFFWSQILTNSTIL. At 538 to 547 the chain is on the cytoplasmic side; the sequence is HDGIREMFKG. The helical transmembrane segment at 548–568 threads the bilayer; it reads VSMLQRIGICALIVSIYEGIV. Residues 569-574 are Lumenal-facing; sequence YGYFDR. A helical membrane pass occupies residues 575–595; sequence WIFTIIFNLLALYPFFCGIKD. Residues 596–599 lie on the Cytoplasmic side of the membrane; the sequence is AKTN. The helical transmembrane segment at 600-620 threads the bilayer; it reads MFWGANSMALSIFTLFDAVKI. Residue E621 is a topological domain, lumenal. A helical transmembrane segment spans residues 622–642; sequence SLTQINVSGLLLVASGLYALW. At 643 to 653 the chain is on the cytoplasmic side; the sequence is RVSKKINSHTK. The chain crosses the membrane as a helical span at residues 654–674; that stretch reads IVILLQILLLAMMLAVTNKSV. Over 675-687 the chain is Lumenal; it reads TSLQQRAGLPTDA. Residues 688–708 traverse the membrane as a helical segment; that stretch reads KIAGWVILTLSLSLMPLLHYL. Topologically, residues 709–719 are cytoplasmic; sequence KPSNDYQVRVL. A helical membrane pass occupies residues 720 to 740; sequence VIYLTFAPTFLILTISFESFF. The Lumenal segment spans residues 741-775; that stretch reads YLLFTNYLMLWIEIESKIKAQNIAKNSQNWLQLLR. A helical membrane pass occupies residues 776 to 796; that stretch reads ISIIGFFLLQFAFFGTGNVAS. At 797-818 the chain is on the cytoplasmic side; it reads ISSFSLDSVYRLMPVFDPFPMG. Residues 819-839 form a helical membrane-spanning segment; it reads ALLILKIMIPYILLSTALGIM. At 840–848 the chain is on the lumenal side; sequence NLKLNIKDY. The helical transmembrane segment at 849-869 threads the bilayer; it reads TVSSLILSTSDVLSLNFFYLL. At 870-885 the chain is on the cytoplasmic side; it reads RTEGSWLDIGVTISNY. A helical transmembrane segment spans residues 886 to 906; the sequence is CLAILSSLFMIVLELFSHFLL. Residues 907-925 are Lumenal-facing; the sequence is KNVRDNGMDIAASKQQKRH.

The protein belongs to the PIGG/PIGN/PIGO family. PIGN subfamily.

The protein localises to the endoplasmic reticulum membrane. It functions in the pathway glycolipid biosynthesis; glycosylphosphatidylinositol-anchor biosynthesis. Ethanolamine phosphate transferase involved in glycosylphosphatidylinositol-anchor biosynthesis. Transfers ethanolamine phosphate to the first alpha-1,4-linked mannose of the glycosylphosphatidylinositol precursor of GPI-anchor. This is GPI ethanolamine phosphate transferase 1 (MCD4) from Eremothecium gossypii (strain ATCC 10895 / CBS 109.51 / FGSC 9923 / NRRL Y-1056) (Yeast).